Reading from the N-terminus, the 200-residue chain is Thymidine kinase (200 aa).

ATP is bound by residues 15-22 (GSMFSGKS) and 88-91 (DEVQ). Glu89 serves as the catalytic Proton acceptor. Zn(2+) is bound by residues Cys145, Cys148, Cys183, and His186.

The protein belongs to the thymidine kinase family. As to quaternary structure, homotetramer.

The protein resides in the cytoplasm. The enzyme catalyses thymidine + ATP = dTMP + ADP + H(+). The chain is Thymidine kinase from Bacillus pumilus (strain SAFR-032).